Reading from the N-terminus, the 93-residue chain is DNA-directed RNA polymerase subunit omega (93 aa).

Belongs to the RNA polymerase subunit omega family. In terms of assembly, the RNAP catalytic core consists of 2 alpha, 1 beta, 1 beta' and 1 omega subunit. When a sigma factor is associated with the core the holoenzyme is formed, which can initiate transcription.

It catalyses the reaction RNA(n) + a ribonucleoside 5'-triphosphate = RNA(n+1) + diphosphate. Promotes RNA polymerase assembly. Latches the N- and C-terminal regions of the beta' subunit thereby facilitating its interaction with the beta and alpha subunits. This Shewanella piezotolerans (strain WP3 / JCM 13877) protein is DNA-directed RNA polymerase subunit omega.